Consider the following 1023-residue polypeptide: 2-oxoglutarate dehydrogenase complex component E1 (1023 aa).

Residues 1–40 constitute a mitochondrion transit peptide; that stretch reads MFHLRTCAAKLRPLTASQTVKTFSQNRPAAARTFQQIRCY. Lys-74 carries the N6-succinyllysine modification. Residue Ser-100 is modified to Phosphoserine. Residues His-143, Asp-156, and Asp-158 each contribute to the Ca(2+) site. Residue Arg-312 coordinates thiamine diphosphate. At Lys-401 the chain carries N6-acetyllysine. Thiamine diphosphate is bound by residues Asp-411, Asn-444, and Ile-446. Mg(2+) contacts are provided by Asp-411, Asn-444, and Ile-446. Lys-534 is covalently cross-linked (Glycyl lysine isopeptide (Lys-Gly) (interchain with G-Cter in ubiquitin)). At Lys-564 the chain carries N6-succinyllysine. Gln-676 contacts thiamine diphosphate. Lys-970 is modified (N6-acetyllysine).

It belongs to the alpha-ketoglutarate dehydrogenase family. Homodimer. The 2-oxoglutarate dehydrogenase complex is composed of OGDH (2-oxoglutarate dehydrogenase; E1), DLST (dihydrolipoamide succinyltransferase; E2), DLD (dihydrolipoamide dehydrogenase; E3) and the assembly factor KGD4. It contains multiple copies of the three enzymatic components (E1, E2 and E3). In the nucleus, the 2-oxoglutarate dehydrogenase complex associates with KAT2A. Interacts with ABHD11; this interaction maintains the functional lipoylation of the 2-oxoglutarate dehydrogenase complex. It depends on thiamine diphosphate as a cofactor. Mg(2+) serves as cofactor.

It is found in the mitochondrion. The protein localises to the nucleus. It catalyses the reaction N(6)-[(R)-lipoyl]-L-lysyl-[protein] + 2-oxoglutarate + H(+) = N(6)-[(R)-S(8)-succinyldihydrolipoyl]-L-lysyl-[protein] + CO2. Calcium ions and ADP stimulate, whereas ATP and NADH reduce catalytic activity. 2-oxoglutarate dehydrogenase (E1o) component of the 2-oxoglutarate dehydrogenase complex (OGDHC). Participates in the first step, rate limiting for the overall conversion of 2-oxoglutarate to succinyl-CoA and CO(2) catalyzed by the whole OGDHC. Catalyzes the irreversible decarboxylation of 2-oxoglutarate (alpha-ketoglutarate) via the thiamine diphosphate (ThDP) cofactor and subsequent transfer of the decarboxylated acyl intermediate on an oxidized dihydrolipoyl group that is covalently amidated to the E2 enzyme (dihydrolipoyllysine-residue succinyltransferase or DLST). Plays a key role in the Krebs (citric acid) cycle, which is a common pathway for oxidation of fuel molecules, including carbohydrates, fatty acids, and amino acids. Can catalyze the decarboxylation of 2-oxoadipate in vitro, but at a much lower rate than 2-oxoglutarate. Mainly active in the mitochondrion. A fraction of the 2-oxoglutarate dehydrogenase complex also localizes in the nucleus and is required for lysine succinylation of histones: associates with KAT2A on chromatin and provides succinyl-CoA to histone succinyltransferase KAT2A. The protein is 2-oxoglutarate dehydrogenase complex component E1 of Macaca fascicularis (Crab-eating macaque).